Reading from the N-terminus, the 130-residue chain is Small ribosomal subunit protein uS11 (130 aa).

This sequence belongs to the universal ribosomal protein uS11 family. As to quaternary structure, part of the 30S ribosomal subunit. Interacts with proteins S7 and S18. Binds to IF-3.

Its function is as follows. Located on the platform of the 30S subunit, it bridges several disparate RNA helices of the 16S rRNA. Forms part of the Shine-Dalgarno cleft in the 70S ribosome. The sequence is that of Small ribosomal subunit protein uS11 from Shewanella frigidimarina (strain NCIMB 400).